A 426-amino-acid polypeptide reads, in one-letter code: Spermatogenesis-associated protein 2-like protein (426 aa).

4 disordered regions span residues 204–223 (AQDE…TYGA), 234–256 (DESS…PVEL), 269–300 (LWGS…EELE), and 316–347 (SRSG…ASSA). A phosphoserine mark is found at serine 318 and serine 326.

Belongs to the SPATA2 family.

The sequence is that of Spermatogenesis-associated protein 2-like protein from Mus musculus (Mouse).